Reading from the N-terminus, the 972-residue chain is Structural polyprotein (972 aa).

Residue aspartate 26 participates in a divalent metal cation binding. Positions 509-734 constitute a Peptidase S50 domain; sequence SGGPDGKFSR…YLGELMASNA (226 aa). Serine 633 functions as the Nucleophile in the catalytic mechanism. Residue lysine 674 is part of the active site. Disordered regions lie at residues 794-817 and 916-972; these read KLIS…AQEA and NGGR…NAEV. The span at 801-817 shows a compositional bias: basic and acidic residues; it reads KHPEKPKGPDQHHAQEA. Polar residues predominate over residues 963-972; the sequence is FTPSGDNAEV.

In terms of assembly, homotrimer. A central divalent metal (possibly cobalt) stabilizes the VP2 trimer. As to quaternary structure, homodimer. interacts (via C-terminus) with VP1 in the cytoplasm. Interacts with VP2. In terms of processing, specific enzymatic cleavages yield mature proteins. The capsid assembly seems to be regulated by polyprotein processing. The protease VP4 cleaves itself off the polyprotein, thus releasing pre-VP2 and VP3 within the infected cell. During capsid assembly, the C-terminus of pre-VP2 is further processed by VP4, giving rise to VP2, the external capsid protein and three small peptides that all stay closely associated with the capsid.

It is found in the virion. The protein resides in the host cytoplasm. In terms of biological role, capsid protein VP2 self assembles to form an icosahedral capsid with a T=13 symmetry, about 70 nm in diameter, and consisting of 260 VP2 trimers. The capsid encapsulates the genomic dsRNA. VP2 is also involved in attachment and entry into the host cell. The precursor of VP2 plays an important role in capsid assembly. First, pre-VP2 and VP2 oligomers assemble to form a procapsid. Then, the pre-VP2 intermediates may be processed into VP2 proteins by proteolytic cleavage mediated by VP4 to obtain the mature virion. The final capsid is composed of pentamers and hexamers but VP2 has a natural tendency to assemble into all-pentameric structures. Therefore pre-VP2 may be required to allow formation of the hexameric structures. Its function is as follows. Protease VP4 is a serine protease that cleaves the polyprotein into its final products. Pre-VP2 is first partially cleaved, and may be completely processed by VP4 upon capsid maturation. Functionally, capsid protein VP3 plays a key role in virion assembly by providing a scaffold for the capsid made of VP2. May self-assemble to form a T=4-like icosahedral inner-capsid composed of at least 180 trimers. Plays a role in genomic RNA packaging by recruiting VP1 into the capsid and interacting with the dsRNA genome segments to form a ribonucleoprotein complex. Additionally, the interaction of the VP3 C-terminal tail with VP1 removes the inherent structural blockade of the polymerase active site. Thus, VP3 can also function as a transcriptional activator. In terms of biological role, structural peptide 1 is a small peptide derived from pre-VP2 C-terminus. It destabilizes and perforates cell membranes, suggesting a role during entry. Structural peptide 2 is a small peptide derived from pVP2 C-terminus. It is not essential for the virus viability, but viral growth is affected when missing. Its function is as follows. Structural peptide 3 is a small peptide derived from pVP2 C-terminus. It is not essential for the virus viability, but viral growth is affected when missing. This chain is Structural polyprotein, found in Infectious pancreatic necrosis virus (strain Sp) (IPNV).